The primary structure comprises 584 residues: MPVTDRSIPSLLKEQADQRPNETAFTFLDYDLDPNGFAETLTWSQVYARACVVADELTMYGVPGDRVAILAPQGLEYIVAFLGALQAGFIGVPLSTPQYGVHDERVSAVLRDSQPVAILTTSAVVGDVTKYASSQDGQPAPSVIEVDLLDLDTPRPQQALPQPASGSAYLQYTSGSTRTPAGVIVSHENVIANVTQSLYGYFGGPDKFPADTTVVSWLPLFHDMGLILGICAPLVTGCTAVLLSPMSFLRRPARWMQLLASHPKCFSAAPNFAFELAVRRTTDEDLAGLDLGDVLGIVSGSERIHVATIKRFTERFAPFNLSPAAVRPSYGLAEATLYVAAPEPGTTPRTVRFDYESLTAGHARPCRADGSVGTELISYGSPDPSAVRIVNPETMIENPSGTVGEIWAHGEHVAMGYWQKPEQSDRTFNARIVNPAPGTPEGPWLRTGDLGVMSNGELFIMGRIKDLVIVDGRNHYPDDIEATIQEITGGRVAAIAVPDNITEQLVAIIELKRRGASAEEAMVKLRSVKREITSAISKSHSLRVADVVLVPPGSIPITTSGKIRRAACVERYRSDGFNRLDVTV.

Belongs to the ATP-dependent AMP-binding enzyme family.

It catalyses the reaction holo-[(phenol)carboxyphthiodiolenone synthase] + a long-chain fatty acid + ATP = a long-chain fatty acyl-[(phenol)carboxyphthiodiolenone synthase] + AMP + diphosphate. It carries out the reaction eicosanoate + holo-[(phenol)carboxyphthiodiolenone synthase] + ATP = icosanoyl-[(phenol)carboxyphthiodiolenone synthase] + AMP + diphosphate. The catalysed reaction is holo-[(phenol)carboxyphthiodiolenone synthase] + docosanoate + ATP = docosanoyl-[(phenol)carboxyphthiodiolenone synthase] + AMP + diphosphate. The protein operates within lipid metabolism; fatty acid biosynthesis. Functionally, catalyzes the activation of long-chain fatty acids as acyl-adenylates (acyl-AMP), which are then transferred to the multifunctional polyketide synthase PpsA for further chain extension. Catalyzes the adenylation of the long-chain fatty acids eicosanoate (C20) or docosanoate (C22), and potentially the very-long-chain fatty acid lignocerate (C24). Involved in the biosynthesis of phthiocerol dimycocerosate (DIM A) and phthiodiolone dimycocerosate (DIM B). The chain is Long-chain-fatty-acid--AMP ligase FadD26 from Mycobacterium marinum (strain ATCC BAA-535 / M).